A 252-amino-acid chain; its full sequence is Proteasome subunit alpha type-3 (252 aa).

This sequence belongs to the peptidase T1A family. In terms of assembly, the 26S proteasome consists of a 20S proteasome core and two 19S regulatory subunits. The 20S proteasome core is composed of 28 subunits that are arranged in four stacked rings, resulting in a barrel-shaped structure. The two end rings are each formed by seven alpha subunits, and the two central rings are each formed by seven beta subunits. The catalytic chamber with the active sites is on the inside of the barrel.

The protein resides in the cytoplasm. It is found in the nucleus. Functionally, the proteasome is a multicatalytic proteinase complex which is characterized by its ability to cleave peptides with Arg, Phe, Tyr, Leu, and Glu adjacent to the leaving group at neutral or slightly basic pH. The proteasome has an ATP-dependent proteolytic activity. The polypeptide is Proteasome subunit alpha type-3 (Acanthamoeba castellanii (Amoeba)).